We begin with the raw amino-acid sequence, 361 residues long: Free fatty acid receptor 4 (361 aa).

Positions 1–21 are disordered; sequence MSPECAQTTGPGPSRTPDQVN. Residues 1–45 lie on the Extracellular side of the membrane; sequence MSPECAQTTGPGPSRTPDQVNRTHFPFFSDVKGDHRLVLSVLETT. N-linked (GlcNAc...) asparagine glycosylation is present at asparagine 21. A helical membrane pass occupies residues 46–66; sequence VLGLIFVVSLLGNVCALVLVV. Over 67–77 the chain is Cytoplasmic; sequence RRRRRGATVSL. A helical transmembrane segment spans residues 78–98; it reads VLNLFCADLLFTSAIPLVLVV. At 99–103 the chain is on the extracellular side; the sequence is RWTEA. Residues 104 to 124 form a helical membrane-spanning segment; that stretch reads WLLGPVVCHLLFYVMTMSGSV. An intrachain disulfide couples cysteine 111 to cysteine 194. Residues 125-156 are Cytoplasmic-facing; it reads TILTLAAVSLERMVCIVRLRRGLSGPGRRTQA. A helical transmembrane segment spans residues 157-177; sequence ALLAFIWGYSALAALPLCILF. At 178–204 the chain is on the extracellular side; that stretch reads RVVPQRLPGGDQEIPICTLDWPNRIGE. Residues 205-225 traverse the membrane as a helical segment; that stretch reads ISWDVFFVTLNFLVPGLVIVI. The Cytoplasmic segment spans residues 226-268; it reads SYSKILQITKASRKRLTLSLAYSESHQIRVSQQDYRLFRTLFL. The helical transmembrane segment at 269–289 threads the bilayer; it reads LMVSFFIMWSPIIITILLILI. The Extracellular segment spans residues 290–295; the sequence is QNFRQD. Residues 296–316 traverse the membrane as a helical segment; that stretch reads LVIWPSLFFWVVAFTFANSAL. The Cytoplasmic portion of the chain corresponds to 317–361; that stretch reads NPILYNMSLFRSEWRKIFCCFFFPEKGAIFTETSIRRNDLSVIST. 2 positions are modified to phosphothreonine: threonine 347 and threonine 349. Serine 350, serine 357, and serine 360 each carry phosphoserine.

It belongs to the G-protein coupled receptor 1 family. As to quaternary structure, interacts (via C-terminus) with ARRB2 following LCFAs stimulation. Post-translationally, phosphorylated at two clusters of Ser and Thr residues located in the intracellular C-terminus. Prerequisite for FFAR4 internalization via an ARRB2-dependent pathway.

Its subcellular location is the cell membrane. The protein resides in the endosome membrane. It localises to the lysosome membrane. The protein localises to the cell projection. It is found in the cilium membrane. In terms of biological role, G-protein-coupled receptor for long-chain fatty acids (LCFAs) with a major role in adipogenesis, energy metabolism and inflammation. Signals via G-protein and beta-arrestin pathways. LCFAs sensing initiates activation of phosphoinositidase C-linked G proteins GNAQ and GNA11 (G(q)/G(11)), inducing a variety of cellular responses via second messenger pathways such as intracellular calcium mobilization, modulation of cyclic adenosine monophosphate (cAMP) production, and mitogen-activated protein kinases (MAPKs). After LCFAs binding, associates with beta-arrestin ARRB2 that acts as an adapter protein coupling the receptor to specific downstream signaling pathways, as well as mediating receptor endocytosis. In response to dietary fats, plays an important role in the regulation of adipocyte proliferation and differentiation. Acts as a receptor for omega-3 polyunsaturated fatty acids (PUFAs) at primary cilium of perivascular preadipocytes, initiating an adipogenic program via cAMP and CTCF-dependent chromatin remodeling that ultimately results in transcriptional activation of adipogenic genes and cell cycle entry. Induces differentiation of brown and beige adipocytes probably via autocrine and endocrine functions of FGF21 hormone. Contributes to the thermogenic activation of brown adipose tissue and the browning of white adipose tissue. Activates brown adipocytes by initiating intracellular calcium signaling leading to mitochondrial depolarization and fission, and overall increased mitochondrial respiration. Consequently stimulates fatty acid uptake and oxidation in mitochondria together with UCP1-mediated thermogenic respiration, eventually reducing fat mass. Regulates bi-potential differentiation of bone marrow mesenchymal stem cells toward osteoblasts or adipocytes likely by up-regulating distinct integrins. In response to dietary fats regulates hormone secretion and appetite. Stimulates GIP and GLP1 secretion from enteroendocrine cells as well as GCG secretion in pancreatic alpha cells, thereby playing a role in the regulation of blood glucose levels. Negatively regulates glucose-induced SST secretion in pancreatic delta cells. Mediates LCFAs inhibition of GHRL secretion, an appetite-controlling hormone. In taste buds, contributes to sensing of dietary fatty acids by the gustatory system. During the inflammatory response, promotes anti-inflammatory M2 macrophage differentiation in adipose tissue. Mediates the anti-inflammatory effects of omega-3 PUFAs via inhibition of NLRP3 inflammasome activation. In this pathway, interacts with adapter protein ARRB2 and inhibits the priming step triggered by Toll-like receptors (TLRs) at the level of TAK1 and TAB1. Further inhibits the activation step when ARRB2 directly associates with NLRP3, leading to inhibition of pro-inflammatory cytokine release. Mediates LCFAs anti-apoptotic effects. This Rattus norvegicus (Rat) protein is Free fatty acid receptor 4 (Ffar4).